The chain runs to 156 residues: Ribosome maturation factor RimP (156 aa).

Belongs to the RimP family.

It is found in the cytoplasm. In terms of biological role, required for maturation of 30S ribosomal subunits. The polypeptide is Ribosome maturation factor RimP (Fusobacterium nucleatum subsp. nucleatum (strain ATCC 25586 / DSM 15643 / BCRC 10681 / CIP 101130 / JCM 8532 / KCTC 2640 / LMG 13131 / VPI 4355)).